Consider the following 454-residue polypeptide: Protein translocase subunit SecY (454 aa).

Helical transmembrane passes span 43–63, 97–117, 144–164, 168–188, 201–221, 226–246, 289–309, 334–354, 390–410, and 414–434; these read LTIALLVFIIKIGMAIPLPYI, FTLGITPSINASIILQLAFVI, TLLLAITQSVFLIFSLRAFIF, ILKLFELSCVLSSGAMIILWI, SSFLIFLNIVSVLPEQIGMSF, IFSFEGLIVILTFSITVWAAI, PVVFASYLIPILKTGGIYILL, IVEAGLICLFALFYSGLIIDP, LIGALILAFNVVLLNLVGFVF, and IFKGFSIGSQIILLGVVTEIL.

This sequence belongs to the SecY/SEC61-alpha family. In terms of assembly, component of the plastid Sec protein translocase complex, which is composed of at least SecY and SecE.

It is found in the plastid. It localises to the chloroplast thylakoid membrane. The central subunit of the protein translocation channel SecYE. Consists of two halves formed by TMs 1-5 and 6-10. These two domains form a lateral gate at the front which open onto the bilayer between TMs 2 and 7, and are clamped together by SecE at the back. The channel is closed by both a pore ring composed of hydrophobic SecY resides and a short helix (helix 2A) on the extracellular side of the membrane which forms a plug. In Heterosigma akashiwo (strain NIES-293 / 8280G21-1), this protein is Protein translocase subunit SecY.